We begin with the raw amino-acid sequence, 1381 residues long: Hepatocyte growth factor receptor (1381 aa).

A signal peptide spans 1–24 (MKAPAVLAPGILVLLFTLVQKSDG). Residues 25–934 (ECKEALVKSE…VQPDQNFTGL (910 aa)) lie on the Extracellular side of the membrane. One can recognise a Sema domain in the interval 27-515 (KEALVKSEMN…TGKKITKIPL (489 aa)). N45 carries an N-linked (GlcNAc...) asparagine glycan. 4 disulfides stabilise this stretch: C95/C101, C98/C160, C133/C141, and C172/C175. N106 is a glycosylation site (N-linked (GlcNAc...) asparagine). Residues N202 and N358 are each glycosylated (N-linked (GlcNAc...) asparagine). Disulfide bonds link C298–C363 and C385–C397. N399, N405, and N449 each carry an N-linked (GlcNAc...) asparagine glycan. 4 disulfides stabilise this stretch: C520-C538, C526-C561, C529-C545, and C541-C551. Residue N553 is glycosylated (N-linked (GlcNAc...) asparagine). IPT/TIG domains are found at residues 563-655 (PTIY…FSYV), 657-739 (PIIT…FSYR), and 742-836 (PIVY…LIYV). Residue T582 is glycosylated (O-linked (Man) threonine). N-linked (GlcNAc...) asparagine glycans are attached at residues N607 and N635. T676 and T761 each carry an O-linked (Man) threonine glycan. N785, N879, and N930 each carry an N-linked (GlcNAc...) asparagine glycan. Residues 935 to 955 (IVGVVSISIILLLLLGLFLWL) form a helical membrane-spanning segment. Over 956–1381 (KRRKQIKDLG…QDNVDGEVDT (426 aa)) the chain is Cytoplasmic. S966 is subject to Phosphoserine. Position 977 is a phosphothreonine (T977). A phosphoserine mark is found at S990, S997, and S1000. Position 1003 is a phosphotyrosine (Y1003). One can recognise a Protein kinase domain in the interval 1078–1345 (VHFNEVIGRG…RISAIFSTFI (268 aa)). Residues 1084–1092 (IGRGHFGCV) and K1110 each bind ATP. D1204 (proton acceptor) is an active-site residue. Residues 1212–1381 (LDEKFTVKVA…QDNVDGEVDT (170 aa)) form an interaction with RANBP9 region. Y1230 bears the Phosphotyrosine mark. Y1234 and Y1235 each carry phosphotyrosine; by autocatalysis. T1289 is modified (phosphothreonine). The interval 1320 to 1359 (WHPKAELRPSFSELVSRISAIFSTFIGEHYVHVNATYVNV) is interaction with MUC20. Phosphotyrosine; by autocatalysis is present on residues Y1349 and Y1356. Y1365 carries the phosphotyrosine modification.

This sequence belongs to the protein kinase superfamily. Tyr protein kinase family. As to quaternary structure, heterodimer made of an alpha chain (50 kDa) and a beta chain (145 kDa) which are disulfide linked. Binds PLXNB1. Interacts when phosphorylated with downstream effectors including STAT3, PIK3R1, SRC, PCLG1, GRB2 and GAB1. Interacts with SPSB1, SPSB2 and SPSB4. Interacts with INPP5D/SHIP1. When phosphorylated at Tyr-1356, interacts with INPPL1/SHIP2. Interacts with RANBP9 and RANBP10, as well as SPSB1, SPSB2, SPSB3 and SPSB4. SPSB1 binding occurs in the presence and in the absence of HGF, however HGF treatment has a positive effect on this interaction. Interacts with MUC20; prevents interaction with GRB2 and suppresses hepatocyte growth factor-induced cell proliferation. Interacts with GRB10. Interacts with PTPN1 and PTPN2. Interacts with HSP90AA1 and HSP90AB1; the interaction suppresses MET kinase activity. Interacts with tensin TNS3. Interacts (when phosphorylated) with tensin TNS4 (via SH2 domain); the interaction increases MET protein stability by inhibiting MET endocytosis and subsequent lysosomal degradation. Post-translationally, autophosphorylated in response to ligand binding on Tyr-1234 and Tyr-1235 in the kinase domain leading to further phosphorylation of Tyr-1349 and Tyr-1356 in the C-terminal multifunctional docking site. Dephosphorylated by PTPRJ at Tyr-1349 and Tyr-1365. Dephosphorylated by PTPN1 and PTPN2. In terms of processing, ubiquitinated. Ubiquitination by CBL regulates the receptor stability and activity through proteasomal degradation. O-mannosylation of IPT/TIG domains by TMEM260 is required for protein maturation. O-mannosylated residues are composed of single mannose glycans that are not elongated or modified.

It is found in the membrane. It carries out the reaction L-tyrosyl-[protein] + ATP = O-phospho-L-tyrosyl-[protein] + ADP + H(+). Its activity is regulated as follows. In its inactive state, the C-terminal tail interacts with the catalytic domain and inhibits the kinase activity. Upon ligand binding, the C-terminal tail is displaced and becomes phosphorylated, thus increasing the kinase activity. In terms of biological role, receptor tyrosine kinase that transduces signals from the extracellular matrix into the cytoplasm by binding to hepatocyte growth factor/HGF ligand. Regulates many physiological processes including proliferation, scattering, morphogenesis and survival. Ligand binding at the cell surface induces autophosphorylation of MET on its intracellular domain that provides docking sites for downstream signaling molecules. Following activation by ligand, interacts with the PI3-kinase subunit PIK3R1, PLCG1, SRC, GRB2, STAT3 or the adapter GAB1. Recruitment of these downstream effectors by MET leads to the activation of several signaling cascades including the RAS-ERK, PI3 kinase-AKT, or PLCgamma-PKC. The RAS-ERK activation is associated with the morphogenetic effects while PI3K/AKT coordinates prosurvival effects. During embryonic development, MET signaling plays a role in gastrulation, development and migration of muscles and neuronal precursors, angiogenesis and kidney formation. In adults, participates in wound healing as well as organ regeneration and tissue remodeling. Also promotes differentiation and proliferation of hematopoietic cells. The polypeptide is Hepatocyte growth factor receptor (MET) (Equus caballus (Horse)).